The primary structure comprises 955 residues: Translation initiation factor IF-2 (955 aa).

Residues 49 to 352 are disordered; that stretch reads AFSQSSESTE…QAPSFGGVKI (304 aa). A compositionally biased stretch (low complexity) spans 77 to 88; that stretch reads PQQQTKASAPSA. 4 stretches are compositionally biased toward pro residues: residues 95–121, 149–159, 188–202, and 209–223; these read PAVP…PGPR, RPVPKPGPRPG, RPGP…PPRP, and PPRP…PRPG. A compositionally biased stretch (gly residues) spans 225–235; that stretch reads GTAGGRPGSSA. Over residues 238–264 the composition is skewed to pro residues; that stretch reads PPRPVPRPGPRPSPMNMPASRPTPPGG. A compositionally biased stretch (gly residues) spans 273–322; it reads SGGGRGRGGGGGAGPRGGGAGGGAPRTGFGGRPGGGRGRGGTAGAFGRPG. Residues 326 to 335 are compositionally biased toward basic residues; sequence SRSRKSKKQR. Positions 448–620 constitute a tr-type G domain; it reads PRAPVVTVMG…IILTADAELD (173 aa). The tract at residues 457 to 464 is G1; that stretch reads GHVDHGKT. Residue 457-464 participates in GTP binding; that stretch reads GHVDHGKT. The segment at 482–486 is G2; it reads GITQH. Residues 507-510 form a G3 region; that stretch reads DTPG. GTP is bound by residues 507-511 and 561-564; these read DTPGH and NKID. A G4 region spans residues 561–564; sequence NKID. The G5 stretch occupies residues 597–599; the sequence is SAK.

It belongs to the TRAFAC class translation factor GTPase superfamily. Classic translation factor GTPase family. IF-2 subfamily.

The protein resides in the cytoplasm. In terms of biological role, one of the essential components for the initiation of protein synthesis. Protects formylmethionyl-tRNA from spontaneous hydrolysis and promotes its binding to the 30S ribosomal subunits. Also involved in the hydrolysis of GTP during the formation of the 70S ribosomal complex. The chain is Translation initiation factor IF-2 from Thermobifida fusca (strain YX).